A 366-amino-acid polypeptide reads, in one-letter code: Ferredoxin--NADP reductase (366 aa).

7 residues coordinate FAD: Asp-51, Gln-59, Tyr-64, Val-104, Phe-139, Asp-308, and Thr-349.

This sequence belongs to the ferredoxin--NADP reductase type 2 family. Homodimer. The cofactor is FAD.

It carries out the reaction 2 reduced [2Fe-2S]-[ferredoxin] + NADP(+) + H(+) = 2 oxidized [2Fe-2S]-[ferredoxin] + NADPH. The sequence is that of Ferredoxin--NADP reductase from Polaromonas naphthalenivorans (strain CJ2).